Here is an 85-residue protein sequence, read N- to C-terminus: UPF0297 protein CHY_0540 (85 aa).

Belongs to the UPF0297 family.

The sequence is that of UPF0297 protein CHY_0540 from Carboxydothermus hydrogenoformans (strain ATCC BAA-161 / DSM 6008 / Z-2901).